The following is a 267-amino-acid chain: Dihydropteroate synthase (267 aa).

The Pterin-binding domain occupies 1–251 (MTKTKIMGIL…NVELNAKLAK (251 aa)). Mg(2+) is bound at residue N11. (7,8-dihydropterin-6-yl)methyl diphosphate is bound by residues T51, D84, N103, D167, K203, and 239–241 (RVH).

This sequence belongs to the DHPS family. In terms of assembly, homodimer. Requires Mg(2+) as cofactor.

The enzyme catalyses (7,8-dihydropterin-6-yl)methyl diphosphate + 4-aminobenzoate = 7,8-dihydropteroate + diphosphate. It participates in cofactor biosynthesis; tetrahydrofolate biosynthesis; 7,8-dihydrofolate from 2-amino-4-hydroxy-6-hydroxymethyl-7,8-dihydropteridine diphosphate and 4-aminobenzoate: step 1/2. Its function is as follows. Catalyzes the condensation of para-aminobenzoate (pABA) with 6-hydroxymethyl-7,8-dihydropterin diphosphate (DHPt-PP) to form 7,8-dihydropteroate (H2Pte), the immediate precursor of folate derivatives. This chain is Dihydropteroate synthase (folP), found in Staphylococcus aureus (strain MSSA476).